Here is a 499-residue protein sequence, read N- to C-terminus: Probable cytosol aminopeptidase (499 aa).

The Mn(2+) site is built by Lys-271 and Asp-276. Lys-283 is a catalytic residue. Mn(2+) is bound by residues Asp-294, Asp-353, and Glu-355. Arg-357 is an active-site residue.

The protein belongs to the peptidase M17 family. The cofactor is Mn(2+).

The protein resides in the cytoplasm. It catalyses the reaction Release of an N-terminal amino acid, Xaa-|-Yaa-, in which Xaa is preferably Leu, but may be other amino acids including Pro although not Arg or Lys, and Yaa may be Pro. Amino acid amides and methyl esters are also readily hydrolyzed, but rates on arylamides are exceedingly low.. It carries out the reaction Release of an N-terminal amino acid, preferentially leucine, but not glutamic or aspartic acids.. Functionally, presumably involved in the processing and regular turnover of intracellular proteins. Catalyzes the removal of unsubstituted N-terminal amino acids from various peptides. In Bordetella parapertussis (strain 12822 / ATCC BAA-587 / NCTC 13253), this protein is Probable cytosol aminopeptidase.